We begin with the raw amino-acid sequence, 126 residues long: Holo-[acyl-carrier-protein] synthase (126 aa).

Mg(2+) contacts are provided by aspartate 8 and glutamate 56.

Belongs to the P-Pant transferase superfamily. AcpS family. The cofactor is Mg(2+).

Its subcellular location is the cytoplasm. The enzyme catalyses apo-[ACP] + CoA = holo-[ACP] + adenosine 3',5'-bisphosphate + H(+). Transfers the 4'-phosphopantetheine moiety from coenzyme A to a Ser of acyl-carrier-protein. The chain is Holo-[acyl-carrier-protein] synthase from Clostridium tetani (strain Massachusetts / E88).